A 376-amino-acid polypeptide reads, in one-letter code: N-acetyldiaminopimelate deacetylase (376 aa).

The active site involves D69. Catalysis depends on E128, which acts as the Proton acceptor.

The protein belongs to the peptidase M20A family. N-acetyldiaminopimelate deacetylase subfamily.

The catalysed reaction is N-acetyl-(2S,6S)-2,6-diaminopimelate + H2O = (2S,6S)-2,6-diaminopimelate + acetate. The protein operates within amino-acid biosynthesis; L-lysine biosynthesis via DAP pathway; LL-2,6-diaminopimelate from (S)-tetrahydrodipicolinate (acetylase route): step 3/3. In terms of biological role, catalyzes the conversion of N-acetyl-diaminopimelate to diaminopimelate and acetate. This is N-acetyldiaminopimelate deacetylase from Streptococcus pneumoniae serotype 19F (strain G54).